A 392-amino-acid chain; its full sequence is N-acetylneuraminate epimerase (392 aa).

The N-terminal stretch at 1 to 35 (MTQLYPQYKKQLTTKIVLFSALSLLMMASLPNTYA) is a signal peptide. Kelch repeat units lie at residues 56-100 (SLYV…VVLA), 102-155 (KLYV…TTLD), 157-192 (SQAV…AVIN), 193-238 (AYFN…SRMD), 241-290 (LILI…LAGA), 312-361 (KQFN…QGPD), and 363-392 (VILI…LHIE). Catalysis depends on E247, which acts as the Proton acceptor.

The protein belongs to the NanM family. As to quaternary structure, homodimer.

Its subcellular location is the periplasm. It carries out the reaction N-acetyl-alpha-neuraminate = N-acetyl-beta-neuraminate. Its function is as follows. Converts alpha-N-acetylneuranimic acid (Neu5Ac) to the beta-anomer, accelerating the equilibrium between the alpha- and beta-anomers. Probably facilitates sialidase-negative bacteria to compete successfully for limited amounts of extracellular Neu5Ac, which is likely taken up in the beta-anomer. In addition, the rapid removal of sialic acid from solution might be advantageous to the bacterium to damp down host responses. In Yersinia pseudotuberculosis serotype O:1b (strain IP 31758), this protein is N-acetylneuraminate epimerase.